Reading from the N-terminus, the 877-residue chain is MMKKLKASEIRQKYLDFFVEKGHMVEPSAPLVPIDDDTLLWINSGVATLKKYFDGRETPKKPRIVNSQKAIRTNDIENVGFTARHHTFFEMLGNFSIGDYFKQEAIEFAWEFLTSDKWMGMEPDKLYVTIHPEDMEAYNIWHKDIGLEESRIIRIEGNFWDIGEGPSGPNTEIFYDRGEAYGQDDPAEEMYPGGENERYLEVWNLVFSEFNHNKDHSYTPLPNKNIDTGMGLERMASVSQNVRTNYETDLFMPIMNEIEKVSGKQYLVNNEQDVAFKVIADHIRTIAFAISDGALPANEGRGYVLRRLLRRAVRFSQTLGINEPFMYKLVDIVADIMEPYYPNVKEKADFIKRVIKSEEERFHETLEDGLAILNELIKKAKATTNEINGKDAFKLYDTYGFPIELTEEIAVQAGLKVDMTTFESEMQQQRDRARQARQNSQSMQVQSEVLKNITSASTFVGYDTATAQTTLTHLIYNGEEVSQVEAGETVYFMLTETPFYAISGGQVADTGIVYNDNFEIAVSEVTKAPNGQNLHKGVVQFGQVNVGATVSAEVNQNDRRDIQKNHSATHLLHAALKSVLGDHVNQAGSLVEADRLRFDFSHFGPMTNDEIDQVERLVNEEIWKGIDVNIQEMDIASAKEMGAMALFGEKYGDVVRVVNMAPFSIELCGGIHVRNTSEIGLFKIVSESGTGAGVRRIEALTGKAAFLYLEDIQEKFNTMKSQLKVKSDDQVVDKLTQLQDEEKALLKQLEQRDKEITSLKMGNIEDQVEEINGYKVLVTEVDVPNAKAIRSTMDDFKSKLQDTIIILASNVDDKVSMVATVPKSLTNNVKAGDLIKQMAPIVGGKGGGRPDMAQGGGTQPENISKSLSFIKDYIKNL.

Residues His566, His570, Cys668, and His672 each coordinate Zn(2+).

It belongs to the class-II aminoacyl-tRNA synthetase family. Zn(2+) serves as cofactor.

The protein localises to the cytoplasm. The catalysed reaction is tRNA(Ala) + L-alanine + ATP = L-alanyl-tRNA(Ala) + AMP + diphosphate. Functionally, catalyzes the attachment of alanine to tRNA(Ala) in a two-step reaction: alanine is first activated by ATP to form Ala-AMP and then transferred to the acceptor end of tRNA(Ala). Also edits incorrectly charged Ser-tRNA(Ala) and Gly-tRNA(Ala) via its editing domain. This is Alanine--tRNA ligase from Staphylococcus aureus (strain USA300 / TCH1516).